The following is a 216-amino-acid chain: Octanoyltransferase (216 aa).

Residues 35 to 213 (NSNPDFIWIG…IIQEEFNFDF (179 aa)) enclose the BPL/LPL catalytic domain. Residues 77–84 (RGGEVTCH), 144–146 (SIG), and 157–159 (GFS) contribute to the substrate site. Cys175 functions as the Acyl-thioester intermediate in the catalytic mechanism.

This sequence belongs to the LipB family.

The protein localises to the cytoplasm. It carries out the reaction octanoyl-[ACP] + L-lysyl-[protein] = N(6)-octanoyl-L-lysyl-[protein] + holo-[ACP] + H(+). The protein operates within protein modification; protein lipoylation via endogenous pathway; protein N(6)-(lipoyl)lysine from octanoyl-[acyl-carrier-protein]: step 1/2. In terms of biological role, catalyzes the transfer of endogenously produced octanoic acid from octanoyl-acyl-carrier-protein onto the lipoyl domains of lipoate-dependent enzymes. Lipoyl-ACP can also act as a substrate although octanoyl-ACP is likely to be the physiological substrate. The chain is Octanoyltransferase from Prochlorococcus marinus (strain MIT 9215).